Consider the following 432-residue polypeptide: Tryptophan--tRNA ligase, cytoplasmic (432 aa).

The 'HIGH' region motif lies at 111 to 120; that stretch reads PSSDSMHLGH. The 'KMSKS' region signature appears at 295 to 299; the sequence is KMSAS.

The protein belongs to the class-I aminoacyl-tRNA synthetase family. Homodimer.

The protein localises to the cytoplasm. It carries out the reaction tRNA(Trp) + L-tryptophan + ATP = L-tryptophyl-tRNA(Trp) + AMP + diphosphate + H(+). The chain is Tryptophan--tRNA ligase, cytoplasmic (WRS1) from Saccharomyces cerevisiae (strain ATCC 204508 / S288c) (Baker's yeast).